The following is a 173-amino-acid chain: Calcium-binding protein 5 (173 aa).

EF-hand domains follow at residues 28-63 (DEIE…MGYM), 82-99 (GRVD…KLLA), 105-140 (IGVQ…LLGE), and 142-173 (LTPR…MMSR). Residues D41, D43, D45, and D52 each contribute to the Ca(2+) site. Ca(2+) is bound by residues D118, N120, D122, E124, E129, D155, N157, D159, T161, and E166.

As to quaternary structure, interacts with CACNA1C (via C-terminal CDB motif) in a calcium-dependent manner. Interacts with STXBP1. Interacts with MYO6. Retina.

It is found in the cytoplasm. Inhibits calcium-dependent inactivation of L-type calcium channel and shifts voltage dependence of activation to more depolarized membrane potentials. Involved in the transmission of light signals. May positively regulate neurotransmitter vesicle endocytosis and exocytosis in a salt-dependent manner. May play a role in the extension and network organization of neurites. The sequence is that of Calcium-binding protein 5 (CABP5) from Homo sapiens (Human).